The primary structure comprises 787 residues: LPS-assembly protein LptD (787 aa).

The first 39 residues, 1-39, serve as a signal peptide directing secretion; the sequence is MPRKTLLPLVPACDAAPRRKRLAAALLAVPGLVPAVSQA.

The protein belongs to the LptD family. As to quaternary structure, component of the lipopolysaccharide transport and assembly complex. Interacts with LptE and LptA.

It localises to the cell outer membrane. Its function is as follows. Together with LptE, is involved in the assembly of lipopolysaccharide (LPS) at the surface of the outer membrane. The sequence is that of LPS-assembly protein LptD from Burkholderia thailandensis (strain ATCC 700388 / DSM 13276 / CCUG 48851 / CIP 106301 / E264).